A 341-amino-acid chain; its full sequence is Anthranilate phosphoribosyltransferase (341 aa).

5-phospho-alpha-D-ribose 1-diphosphate is bound by residues Gly84, 87 to 88 (GD), Thr92, 94 to 97 (NIST), 112 to 120 (KHGNRSVSS), and Ser124. Residue Gly84 coordinates anthranilate. Ser96 is a Mg(2+) binding site. Asn115 contacts anthranilate. Arg170 lines the anthranilate pocket. 2 residues coordinate Mg(2+): Asp229 and Glu230.

Belongs to the anthranilate phosphoribosyltransferase family. In terms of assembly, homodimer. Mg(2+) is required as a cofactor.

It carries out the reaction N-(5-phospho-beta-D-ribosyl)anthranilate + diphosphate = 5-phospho-alpha-D-ribose 1-diphosphate + anthranilate. It functions in the pathway amino-acid biosynthesis; L-tryptophan biosynthesis; L-tryptophan from chorismate: step 2/5. In terms of biological role, catalyzes the transfer of the phosphoribosyl group of 5-phosphorylribose-1-pyrophosphate (PRPP) to anthranilate to yield N-(5'-phosphoribosyl)-anthranilate (PRA). This is Anthranilate phosphoribosyltransferase from Polynucleobacter necessarius subsp. necessarius (strain STIR1).